A 162-amino-acid polypeptide reads, in one-letter code: Large ribosomal subunit protein uL10 (162 aa).

This sequence belongs to the universal ribosomal protein uL10 family. Part of the ribosomal stalk of the 50S ribosomal subunit. The N-terminus interacts with L11 and the large rRNA to form the base of the stalk. The C-terminus forms an elongated spine to which L12 dimers bind in a sequential fashion forming a multimeric L10(L12)X complex.

Its function is as follows. Forms part of the ribosomal stalk, playing a central role in the interaction of the ribosome with GTP-bound translation factors. In Vibrio parahaemolyticus serotype O3:K6 (strain RIMD 2210633), this protein is Large ribosomal subunit protein uL10.